The primary structure comprises 197 residues: Ribonuclease HII (197 aa).

One can recognise an RNase H type-2 domain in the interval 9–197 (KLIAGVDEVG…APVKKALEQF (189 aa)). A divalent metal cation-binding residues include aspartate 15, glutamate 16, and aspartate 107.

It belongs to the RNase HII family. Mn(2+) serves as cofactor. Requires Mg(2+) as cofactor.

The protein localises to the cytoplasm. The enzyme catalyses Endonucleolytic cleavage to 5'-phosphomonoester.. In terms of biological role, endonuclease that specifically degrades the RNA of RNA-DNA hybrids. The protein is Ribonuclease HII (rnhB) of Haemophilus influenzae (strain ATCC 51907 / DSM 11121 / KW20 / Rd).